We begin with the raw amino-acid sequence, 441 residues long: Cysteine--tRNA ligase (441 aa).

Cys24 is a Zn(2+) binding site. Positions 26-36 match the 'HIGH' region motif; it reads PTVYNYIHIGN. Positions 204, 230, and 234 each coordinate Zn(2+). Residues 262-266 carry the 'KMSKS' region motif; that stretch reads KMSKS. ATP is bound at residue Lys265.

It belongs to the class-I aminoacyl-tRNA synthetase family. In terms of assembly, monomer. It depends on Zn(2+) as a cofactor.

The protein resides in the cytoplasm. The enzyme catalyses tRNA(Cys) + L-cysteine + ATP = L-cysteinyl-tRNA(Cys) + AMP + diphosphate. The polypeptide is Cysteine--tRNA ligase (Mycoplasma capricolum subsp. capricolum (strain California kid / ATCC 27343 / NCTC 10154)).